The chain runs to 525 residues: Protein ea59 (525 aa).

This chain is Protein ea59 (ea59), found in Escherichia coli (Bacteriophage lambda).